Reading from the N-terminus, the 524-residue chain is 2-isopropylmalate synthase (524 aa).

The Pyruvate carboxyltransferase domain maps to 5–267; that stretch reads VIIFDTTLRD…HTNINHQEIF (263 aa). Mn(2+)-binding residues include Asp14, His202, His204, and Asn238. The regulatory domain stretch occupies residues 392–524; that stretch reads SLDYFSVQSG…SKHQNNQETV (133 aa).

It belongs to the alpha-IPM synthase/homocitrate synthase family. LeuA type 1 subfamily. As to quaternary structure, homodimer. Requires Mn(2+) as cofactor.

The protein localises to the cytoplasm. It carries out the reaction 3-methyl-2-oxobutanoate + acetyl-CoA + H2O = (2S)-2-isopropylmalate + CoA + H(+). Its pathway is amino-acid biosynthesis; L-leucine biosynthesis; L-leucine from 3-methyl-2-oxobutanoate: step 1/4. Its function is as follows. Catalyzes the condensation of the acetyl group of acetyl-CoA with 3-methyl-2-oxobutanoate (2-ketoisovalerate) to form 3-carboxy-3-hydroxy-4-methylpentanoate (2-isopropylmalate). This Serratia proteamaculans (strain 568) protein is 2-isopropylmalate synthase.